The primary structure comprises 484 residues: L-aspartate oxidase (484 aa).

FAD is bound by residues 11–14 (SGIS), K33, 40–47 (NSMLAQGG), and D203. The Proton donor/acceptor role is filled by R270. FAD contacts are provided by residues E352 and 368 to 369 (SL).

It belongs to the FAD-dependent oxidoreductase 2 family. NadB subfamily. FAD serves as cofactor.

Its subcellular location is the cytoplasm. It carries out the reaction L-aspartate + O2 = iminosuccinate + H2O2. It participates in cofactor biosynthesis; NAD(+) biosynthesis; iminoaspartate from L-aspartate (oxidase route): step 1/1. Catalyzes the oxidation of L-aspartate to iminoaspartate, the first step in the de novo biosynthesis of NAD(+). This is L-aspartate oxidase (nadB) from Listeria monocytogenes serovar 1/2a (strain ATCC BAA-679 / EGD-e).